The primary structure comprises 112 residues: uncharacterized protein (112 aa).

This is an uncharacterized protein from Methanocaldococcus jannaschii (strain ATCC 43067 / DSM 2661 / JAL-1 / JCM 10045 / NBRC 100440) (Methanococcus jannaschii).